The primary structure comprises 95 residues: Ubiquinol-cytochrome-c reductase complex assembly factor 3 (95 aa).

Topologically, residues 1–7 (MTTLRKL) are mitochondrial matrix. A helical membrane pass occupies residues 8-28 (LLVGALLGAGAGVGTALFALV). Residues 23–80 (ALFALVTPGEERKQAMLKEMPEQYPQRRDEAARTKELLLATLQEAAATQENVAWRKNW) are mediates lipid-binding. Residues 29–95 (TPGEERKQAM…GGGGGGGRSA (67 aa)) are Mitochondrial intermembrane-facing.

It belongs to the UQCC3 family. Associates with the ubiquinol-cytochrome c reductase complex (mitochondrial respiratory chain complex III(CIII) or cytochrome b-c1 complex). Interacts with UQCC1. Forms a complex, named COMC, composed of UQCC1, UQCC2; UQCC3 and UQCC4; mediates MT-CYB hemylation and association with the first nuclear-encoded complex III subunit UQCRQ. Post-translationally, probably cleaved by OMA1 under mitochondrial stress conditions.

It is found in the mitochondrion inner membrane. Its function is as follows. Required for the assembly of the ubiquinol-cytochrome c reductase complex (mitochondrial respiratory chain complex III or cytochrome b-c1 complex), mediating cytochrome b recruitment and probably stabilization within the complex. Thereby, plays an important role in ATP production by mitochondria. Cardiolipin-binding protein, it may also control the cardiolipin composition of mitochondria membranes and their morphology. In Bos taurus (Bovine), this protein is Ubiquinol-cytochrome-c reductase complex assembly factor 3.